Consider the following 351-residue polypeptide: Protein-glutamate methylesterase/protein-glutamine glutaminase (351 aa).

The Response regulatory domain maps to 6 to 123 (RVLVVDDSPT…ARPFGDLADK (118 aa)). 4-aspartylphosphate is present on D57. Positions 154-346 (YRAGRKVVAI…EEILKLTTAR (193 aa)) constitute a CheB-type methylesterase domain. Residues S166, H192, and D288 contribute to the active site.

The protein belongs to the CheB family. Phosphorylated by CheA. Phosphorylation of the N-terminal regulatory domain activates the methylesterase activity.

The protein resides in the cytoplasm. The enzyme catalyses [protein]-L-glutamate 5-O-methyl ester + H2O = L-glutamyl-[protein] + methanol + H(+). It carries out the reaction L-glutaminyl-[protein] + H2O = L-glutamyl-[protein] + NH4(+). Functionally, involved in chemotaxis. Part of a chemotaxis signal transduction system that modulates chemotaxis in response to various stimuli. Catalyzes the demethylation of specific methylglutamate residues introduced into the chemoreceptors (methyl-accepting chemotaxis proteins or MCP) by CheR. Also mediates the irreversible deamidation of specific glutamine residues to glutamic acid. The sequence is that of Protein-glutamate methylesterase/protein-glutamine glutaminase from Agrobacterium fabrum (strain C58 / ATCC 33970) (Agrobacterium tumefaciens (strain C58)).